The following is a 140-amino-acid chain: Methylglyoxal synthase (140 aa).

In terms of domain architecture, MGS-like spans Met1–Leu140. Substrate-binding positions include His8, Lys12, Thr34–Thr37, and Ser54–Gly55. Asp60 acts as the Proton donor/acceptor in catalysis. His87 provides a ligand contact to substrate.

This sequence belongs to the methylglyoxal synthase family.

The enzyme catalyses dihydroxyacetone phosphate = methylglyoxal + phosphate. Its function is as follows. Catalyzes the formation of methylglyoxal from dihydroxyacetone phosphate. The sequence is that of Methylglyoxal synthase from Geobacillus sp. (strain WCH70).